Consider the following 482-residue polypeptide: tRNA sulfurtransferase (482 aa).

The 105-residue stretch at Leu-61–Arg-165 folds into the THUMP domain. ATP contacts are provided by residues Leu-183–Ile-184, Lys-265, Gly-287, and Gln-296. Residues Cys-344 and Cys-456 are joined by a disulfide bond. Residues Phe-404–Pro-482 enclose the Rhodanese domain. Residue Cys-456 is the Cysteine persulfide intermediate of the active site.

The protein belongs to the ThiI family.

It is found in the cytoplasm. It catalyses the reaction [ThiI sulfur-carrier protein]-S-sulfanyl-L-cysteine + a uridine in tRNA + 2 reduced [2Fe-2S]-[ferredoxin] + ATP + H(+) = [ThiI sulfur-carrier protein]-L-cysteine + a 4-thiouridine in tRNA + 2 oxidized [2Fe-2S]-[ferredoxin] + AMP + diphosphate. The catalysed reaction is [ThiS sulfur-carrier protein]-C-terminal Gly-Gly-AMP + S-sulfanyl-L-cysteinyl-[cysteine desulfurase] + AH2 = [ThiS sulfur-carrier protein]-C-terminal-Gly-aminoethanethioate + L-cysteinyl-[cysteine desulfurase] + A + AMP + 2 H(+). It participates in cofactor biosynthesis; thiamine diphosphate biosynthesis. In terms of biological role, catalyzes the ATP-dependent transfer of a sulfur to tRNA to produce 4-thiouridine in position 8 of tRNAs, which functions as a near-UV photosensor. Also catalyzes the transfer of sulfur to the sulfur carrier protein ThiS, forming ThiS-thiocarboxylate. This is a step in the synthesis of thiazole, in the thiamine biosynthesis pathway. The sulfur is donated as persulfide by IscS. In Escherichia fergusonii (strain ATCC 35469 / DSM 13698 / CCUG 18766 / IAM 14443 / JCM 21226 / LMG 7866 / NBRC 102419 / NCTC 12128 / CDC 0568-73), this protein is tRNA sulfurtransferase.